An 826-amino-acid polypeptide reads, in one-letter code: Periplasmic nitrate reductase (826 aa).

Positions 1 to 32 form a signal peptide, tat-type signal; the sequence is MELNRRDFMKANAAIAAAAAAGITIPVKNVQA. The 57-residue stretch at 37–93 folds into the 4Fe-4S Mo/W bis-MGD-type domain; it reads IRWDKAPCRYCGTGCSVLVGTKDGRVVATQGDPDAEVNRGLNCIKGYFLSKIMYGAD. Residues Cys44, Cys47, Cys51, and Cys79 each contribute to the [4Fe-4S] cluster site. Residues Lys81, Gln148, Asn173, Cys177, 210-217, 241-245, 260-262, Met370, Gln374, Asn480, 506-507, Lys529, Asp556, and 716-725 each bind Mo-bis(molybdopterin guanine dinucleotide); these read WGSNMAEM, STYEH, QSD, SD, and TGRVLEHWHT. Phe792 provides a ligand contact to substrate. 2 residues coordinate Mo-bis(molybdopterin guanine dinucleotide): Asn800 and Lys817.

It belongs to the prokaryotic molybdopterin-containing oxidoreductase family. NasA/NapA/NarB subfamily. Component of the periplasmic nitrate reductase NapAB complex composed of NapA and NapB. Requires [4Fe-4S] cluster as cofactor. Mo-bis(molybdopterin guanine dinucleotide) is required as a cofactor. In terms of processing, predicted to be exported by the Tat system. The position of the signal peptide cleavage has not been experimentally proven.

Its subcellular location is the periplasm. The enzyme catalyses 2 Fe(II)-[cytochrome] + nitrate + 2 H(+) = 2 Fe(III)-[cytochrome] + nitrite + H2O. Catalytic subunit of the periplasmic nitrate reductase complex NapAB. Receives electrons from NapB and catalyzes the reduction of nitrate to nitrite. This is Periplasmic nitrate reductase from Actinobacillus succinogenes (strain ATCC 55618 / DSM 22257 / CCUG 43843 / 130Z).